Here is a 609-residue protein sequence, read N- to C-terminus: Protein NRT1/ PTR FAMILY 7.1 (609 aa).

Helical transmembrane passes span 67–87 and 109–129; these read IILL…GVNL and WTGT…SYWG. Position 133 is a phosphothreonine (T133). A run of 10 helical transmembrane segments spans residues 136 to 156, 173 to 193, 216 to 236, 243 to 263, 367 to 387, 402 to 422, 438 to 458, 474 to 494, 516 to 536, and 559 to 579; these read IFQV…WFFL, SSLG…GYGG, FFSY…TILV, LWTE…VAFL, PIWL…SLFV, IPAA…TGIY, MGIG…TEIQ, ILWQ…MYVG, MASM…VMAI, and FYFL…IFAK.

The protein belongs to the major facilitator superfamily. Proton-dependent oligopeptide transporter (POT/PTR) (TC 2.A.17) family. In terms of tissue distribution, expressed in flowers.

It is found in the membrane. The polypeptide is Protein NRT1/ PTR FAMILY 7.1 (NPF7.1) (Arabidopsis thaliana (Mouse-ear cress)).